The following is a 264-amino-acid chain: Hemin import ATP-binding protein HmuV (264 aa).

The ABC transporter domain maps to 10 to 246; the sequence is LQAQNLSYSI…HTLRKWYQAD (237 aa). 42–49 contacts ATP; sequence GPNGAGKS.

This sequence belongs to the ABC transporter superfamily. Heme (hemin) importer (TC 3.A.1.14.5) family. As to quaternary structure, the complex is composed of two ATP-binding proteins (HmuV), two transmembrane proteins (HmuU) and a solute-binding protein (HmuT).

It localises to the cell inner membrane. Functionally, part of the ABC transporter complex HmuTUV involved in hemin import. Responsible for energy coupling to the transport system. The sequence is that of Hemin import ATP-binding protein HmuV from Photorhabdus laumondii subsp. laumondii (strain DSM 15139 / CIP 105565 / TT01) (Photorhabdus luminescens subsp. laumondii).